A 350-amino-acid polypeptide reads, in one-letter code: MDLTVEPNLKSLITSSTHKWIFVGGKGGVGKTTSSCSIAIQMALAQPHKKFLLISTDPAHNLSDAFGEKFDKDARKVTGMDNLSCMEIDPSAALKDMNDMAVSSAGENGNDDLGGLLQGGALADLTGSIPGIDEALSFMEVMKHIKKQEQGDGESFDTVIFDTAPTGHTLRFLQLPTTLSKLLDKFSEITGRLGPMLNSMMGSGNVDIAGKLNELKANVETIKEQFTDPDLTTFVCVCISEFLSLYETERLIQELISYDMDVNSIIVNQLLFAEFDQEHNCKRCQSRWKMQKKYLDQIDELYEDFHVVKMPLCAGEIRGLNNLKKFSQFLFKEYDPVADNTVIYELEEKN.

26 to 33 (KGGVGKTT) is an ATP binding site. Asp-57 is a catalytic residue. Residues Glu-241 and Asn-268 each coordinate ATP. Zn(2+) is bound by residues Cys-281 and Cys-284.

This sequence belongs to the arsA ATPase family. As to quaternary structure, homodimer. Component of the Golgi to ER traffic (GET) complex, which is composed of GET1, GET2 and GET3. Within the complex, GET1 and GET2 form a heterotetramer which is stabilized by phosphatidylinositol binding and which binds to the GET3 homodimer. Interacts with the chloride channel protein GEF1.

Its subcellular location is the cytoplasm. It localises to the endoplasmic reticulum. It is found in the golgi apparatus. ATPase required for the post-translational delivery of tail-anchored (TA) proteins to the endoplasmic reticulum. Recognizes and selectively binds the transmembrane domain of TA proteins in the cytosol. This complex then targets to the endoplasmic reticulum by membrane-bound receptors GET1 and GET2, where the tail-anchored protein is released for insertion. This process is regulated by ATP binding and hydrolysis. ATP binding drives the homodimer towards the closed dimer state, facilitating recognition of newly synthesized TA membrane proteins. ATP hydrolysis is required for insertion. Subsequently, the homodimer reverts towards the open dimer state, lowering its affinity for the GET1-GET2 receptor, and returning it to the cytosol to initiate a new round of targeting. Cooperates with the HDEL receptor ERD2 to mediate the ATP-dependent retrieval of resident ER proteins that contain a C-terminal H-D-E-L retention signal from the Golgi to the ER. Involved in low-level resistance to the oxyanions arsenite and arsenate, and in heat tolerance. The chain is ATPase GET3 from Candida glabrata (strain ATCC 2001 / BCRC 20586 / JCM 3761 / NBRC 0622 / NRRL Y-65 / CBS 138) (Yeast).